Consider the following 464-residue polypeptide: 3-isopropylmalate dehydratase large subunit (464 aa).

Cysteine 337, cysteine 397, and cysteine 400 together coordinate [4Fe-4S] cluster.

The protein belongs to the aconitase/IPM isomerase family. LeuC type 1 subfamily. In terms of assembly, heterodimer of LeuC and LeuD. The cofactor is [4Fe-4S] cluster.

The enzyme catalyses (2R,3S)-3-isopropylmalate = (2S)-2-isopropylmalate. Its pathway is amino-acid biosynthesis; L-leucine biosynthesis; L-leucine from 3-methyl-2-oxobutanoate: step 2/4. In terms of biological role, catalyzes the isomerization between 2-isopropylmalate and 3-isopropylmalate, via the formation of 2-isopropylmaleate. The chain is 3-isopropylmalate dehydratase large subunit from Bacillus cereus (strain 03BB102).